The following is a 357-amino-acid chain: Glycerol-3-phosphate dehydrogenase [NAD(P)+] (357 aa).

S12, W13, H33, and K115 together coordinate NADPH. Residues K115, G149, and S151 each coordinate sn-glycerol 3-phosphate. G153 provides a ligand contact to NADPH. Sn-glycerol 3-phosphate-binding residues include K204, D263, R274, and N275. Catalysis depends on K204, which acts as the Proton acceptor. R274 is a binding site for NADPH. The NADPH site is built by L307 and E309.

Belongs to the NAD-dependent glycerol-3-phosphate dehydrogenase family.

The protein resides in the cytoplasm. It catalyses the reaction sn-glycerol 3-phosphate + NAD(+) = dihydroxyacetone phosphate + NADH + H(+). The catalysed reaction is sn-glycerol 3-phosphate + NADP(+) = dihydroxyacetone phosphate + NADPH + H(+). It functions in the pathway membrane lipid metabolism; glycerophospholipid metabolism. Functionally, catalyzes the reduction of the glycolytic intermediate dihydroxyacetone phosphate (DHAP) to sn-glycerol 3-phosphate (G3P), the key precursor for phospholipid synthesis. The chain is Glycerol-3-phosphate dehydrogenase [NAD(P)+] from Treponema denticola (strain ATCC 35405 / DSM 14222 / CIP 103919 / JCM 8153 / KCTC 15104).